An 88-amino-acid chain; its full sequence is Large ribosomal subunit protein bL27 (88 aa).

The tract at residues 1 to 21 is disordered; sequence MAHKKGQGSTQNNRDSAGRRL.

Belongs to the bacterial ribosomal protein bL27 family.

The chain is Large ribosomal subunit protein bL27 from Helicobacter acinonychis (strain Sheeba).